A 127-amino-acid polypeptide reads, in one-letter code: Aspartate 1-decarboxylase (127 aa).

Ser25 functions as the Schiff-base intermediate with substrate; via pyruvic acid in the catalytic mechanism. At Ser25 the chain carries Pyruvic acid (Ser). Substrate is bound at residue Thr57. Tyr58 acts as the Proton donor in catalysis. Residue Gly73–Ala75 coordinates substrate.

The protein belongs to the PanD family. In terms of assembly, heterooctamer of four alpha and four beta subunits. It depends on pyruvate as a cofactor. In terms of processing, is synthesized initially as an inactive proenzyme, which is activated by self-cleavage at a specific serine bond to produce a beta-subunit with a hydroxyl group at its C-terminus and an alpha-subunit with a pyruvoyl group at its N-terminus.

Its subcellular location is the cytoplasm. The catalysed reaction is L-aspartate + H(+) = beta-alanine + CO2. It functions in the pathway cofactor biosynthesis; (R)-pantothenate biosynthesis; beta-alanine from L-aspartate: step 1/1. Functionally, catalyzes the pyruvoyl-dependent decarboxylation of aspartate to produce beta-alanine. In Staphylococcus aureus (strain bovine RF122 / ET3-1), this protein is Aspartate 1-decarboxylase.